The following is a 680-amino-acid chain: Protein FAR1-RELATED SEQUENCE 11 (680 aa).

Residues 1–36 are disordered; the sequence is MSDDPGQMLLIYDDPSDQRSLSLDDASSTEESPDDN. An FAR1 domain is found at 62-156; the sequence is EFYSTFAKRC…ANHHNHELLE (95 aa). The region spanning 277–373 is the MULE domain; sequence AVVFDTTHRL…CIWMVVGKFP (97 aa). An SWIM-type zinc finger spans residues 556-589; sequence YWVPQEGIISCSCQLFEFSGFLCRHALRVLSTGN.

Belongs to the FHY3/FAR1 family. As to expression, expressed in hypocotyls, rosette and cauline leaves, inflorescences stems, flowers and siliques.

It is found in the nucleus. In terms of biological role, putative transcription activator involved in regulating light control of development. The polypeptide is Protein FAR1-RELATED SEQUENCE 11 (FRS11) (Arabidopsis thaliana (Mouse-ear cress)).